Reading from the N-terminus, the 518-residue chain is Glutamate--cysteine ligase (518 aa).

This sequence belongs to the glutamate--cysteine ligase type 1 family. Type 1 subfamily.

It catalyses the reaction L-cysteine + L-glutamate + ATP = gamma-L-glutamyl-L-cysteine + ADP + phosphate + H(+). The protein operates within sulfur metabolism; glutathione biosynthesis; glutathione from L-cysteine and L-glutamate: step 1/2. This is Glutamate--cysteine ligase from Escherichia coli O139:H28 (strain E24377A / ETEC).